A 274-amino-acid polypeptide reads, in one-letter code: Purine nucleoside phosphorylase 1 (274 aa).

Residues S29, H60, R80–H82, and A112 contribute to the phosphate site. S29 is subject to Phosphoserine. E192 contacts a purine D-ribonucleoside. S211 is a phosphate binding site. A purine D-ribonucleoside is bound at residue N234.

Belongs to the PNP/MTAP phosphorylase family. In terms of assembly, homotrimer.

The catalysed reaction is a purine D-ribonucleoside + phosphate = a purine nucleobase + alpha-D-ribose 1-phosphate. It catalyses the reaction a purine 2'-deoxy-D-ribonucleoside + phosphate = a purine nucleobase + 2-deoxy-alpha-D-ribose 1-phosphate. The protein operates within purine metabolism; purine nucleoside salvage. Functionally, the purine nucleoside phosphorylases catalyze the phosphorolytic breakdown of the N-glycosidic bond in the beta-(deoxy)ribonucleoside molecules, with the formation of the corresponding free purine bases and pentose-1-phosphate. Cleaves guanosine, inosine, 2'-deoxyguanosine and 2'-deoxyinosine. This is Purine nucleoside phosphorylase 1 (punA) from Geobacillus stearothermophilus (Bacillus stearothermophilus).